We begin with the raw amino-acid sequence, 148 residues long: Large ribosomal subunit protein bL9 (148 aa).

The protein belongs to the bacterial ribosomal protein bL9 family.

Binds to the 23S rRNA. The sequence is that of Large ribosomal subunit protein bL9 from Salinispora tropica (strain ATCC BAA-916 / DSM 44818 / JCM 13857 / NBRC 105044 / CNB-440).